Consider the following 969-residue polypeptide: Lateral signaling target protein 2 homolog (969 aa).

A Glycyl lysine isopeptide (Lys-Gly) (interchain with G-Cter in ubiquitin) cross-link involves residue Lys-87. 4 disordered regions span residues 290 to 323 (QDGE…GVEE), 336 to 360 (SVWK…EEPI), 390 to 437 (STLL…YHDD), and 715 to 777 (RSEC…DMSE). Positions 295 to 310 (PTSSTNDPSASTGPDS) are enriched in polar residues. The span at 336 to 346 (SVWKEEEEKQV) shows a compositional bias: basic and acidic residues. Polar residues predominate over residues 391-402 (TLLSPPSQNQSP). The span at 411–423 (GSSLEGSSATSST) shows a compositional bias: low complexity. The span at 715–729 (RSECFGKQSKDDNRK) shows a compositional bias: basic and acidic residues. Low complexity-rich tracts occupy residues 732 to 745 (SSSQ…VPSS) and 756 to 769 (SLSS…VSSL). Residues 899–959 (DEACNSCIAC…VCTHCYMFHV (61 aa)) form an FYVE-type zinc finger. Positions 905, 908, 921, 924, 929, 932, 951, and 954 each coordinate Zn(2+).

Belongs to the lst-2 family. Post-translationally, monoubiquitination at Lys-87 prevents binding to phosphatidylinositol 3-phosphate (PI3P) and localization to early endosome membranes.

The protein localises to the cytoplasm. Its subcellular location is the cytosol. It is found in the early endosome membrane. In terms of biological role, negative regulator of epidermal growth factor receptor (EGFR) signaling. Acts by promoting EGFR degradation in endosomes when not monoubiquitinated. The chain is Lateral signaling target protein 2 homolog (zfyve28) from Danio rerio (Zebrafish).